Reading from the N-terminus, the 399-residue chain is Succinate--CoA ligase [ADP-forming] subunit beta (399 aa).

Positions 9-254 (KAVLQPFGVS…TTEEDAKEIE (246 aa)) constitute an ATP-grasp domain. Residues Lys46, 53-55 (GRG), Glu109, Ser112, and Glu117 each bind ATP. The Mg(2+) site is built by Asn209 and Asp223. Substrate-binding positions include Asn274 and 331-333 (GIM).

It belongs to the succinate/malate CoA ligase beta subunit family. In terms of assembly, heterotetramer of two alpha and two beta subunits. Requires Mg(2+) as cofactor.

It carries out the reaction succinate + ATP + CoA = succinyl-CoA + ADP + phosphate. The enzyme catalyses GTP + succinate + CoA = succinyl-CoA + GDP + phosphate. The protein operates within carbohydrate metabolism; tricarboxylic acid cycle; succinate from succinyl-CoA (ligase route): step 1/1. Succinyl-CoA synthetase functions in the citric acid cycle (TCA), coupling the hydrolysis of succinyl-CoA to the synthesis of either ATP or GTP and thus represents the only step of substrate-level phosphorylation in the TCA. The beta subunit provides nucleotide specificity of the enzyme and binds the substrate succinate, while the binding sites for coenzyme A and phosphate are found in the alpha subunit. This Rhodopseudomonas palustris (strain BisA53) protein is Succinate--CoA ligase [ADP-forming] subunit beta.